Consider the following 161-residue polypeptide: Glycine/sarcosine/betaine reductase complex component A2 (161 aa).

Residue Sec42 is part of the active site. Position 42 (Sec42) is a non-standard amino acid, selenocysteine.

It belongs to the GrdA family. In terms of assembly, monomer. Component of the glycine, sarcosine and betaine reductase complexes, together with components B and C.

It catalyses the reaction acetyl phosphate + [thioredoxin]-disulfide + NH4(+) + H2O = [thioredoxin]-dithiol + glycine + phosphate + H(+). The catalysed reaction is acetyl phosphate + methylamine + [thioredoxin]-disulfide + H2O = sarcosine + [thioredoxin]-dithiol + phosphate + H(+). It carries out the reaction acetyl phosphate + trimethylamine + [thioredoxin]-disulfide + H2O = glycine betaine + [thioredoxin]-dithiol + phosphate + H(+). In terms of biological role, in the first step of glycine, betaine and sarcosine reductases, the substrate is bound to component PB via a Schiff base intermediate. Then the PB-activated substrate is nucleophilically attacked by the selenol anion of component PA to transform it to a carboxymethylated selenoether and the respective amine. By action of component PC, acetyl phosphate is formed, leaving component PA in its oxidized state. Finally component PA becomes reduced by the thioredoxin system to start a new catalytic cycle of reductive deamination. This Photobacterium profundum (strain SS9) protein is Glycine/sarcosine/betaine reductase complex component A2 (grdA2).